The following is a 424-amino-acid chain: Glutamyl-tRNA reductase (424 aa).

Substrate is bound by residues 49–52 (TCNR), serine 109, 114–116 (EDQ), and glutamine 120. The active-site Nucleophile is cysteine 50. Residue 189–194 (GFGKMS) participates in NADP(+) binding.

The protein belongs to the glutamyl-tRNA reductase family. As to quaternary structure, homodimer.

It carries out the reaction (S)-4-amino-5-oxopentanoate + tRNA(Glu) + NADP(+) = L-glutamyl-tRNA(Glu) + NADPH + H(+). The protein operates within porphyrin-containing compound metabolism; protoporphyrin-IX biosynthesis; 5-aminolevulinate from L-glutamyl-tRNA(Glu): step 1/2. In terms of biological role, catalyzes the NADPH-dependent reduction of glutamyl-tRNA(Glu) to glutamate 1-semialdehyde (GSA). The protein is Glutamyl-tRNA reductase of Alkaliphilus metalliredigens (strain QYMF).